The primary structure comprises 201 residues: Imidazoleglycerol-phosphate dehydratase (201 aa).

The protein belongs to the imidazoleglycerol-phosphate dehydratase family.

The protein localises to the cytoplasm. It carries out the reaction D-erythro-1-(imidazol-4-yl)glycerol 3-phosphate = 3-(imidazol-4-yl)-2-oxopropyl phosphate + H2O. The protein operates within amino-acid biosynthesis; L-histidine biosynthesis; L-histidine from 5-phospho-alpha-D-ribose 1-diphosphate: step 6/9. This Methanopyrus kandleri (strain AV19 / DSM 6324 / JCM 9639 / NBRC 100938) protein is Imidazoleglycerol-phosphate dehydratase.